Here is a 290-residue protein sequence, read N- to C-terminus: RIO-type serine/threonine-protein kinase Rio1 (290 aa).

Residues 76–290 enclose the Protein kinase domain; that stretch reads TEYIGIVNSG…PIDEAMIKQL (215 aa). Residues 82–90 and lysine 103 each bind ATP; that span reads VNSGKEAVV. Aspartate 214 acts as the Proton acceptor in catalysis. 2 residues coordinate Mg(2+): asparagine 219 and aspartate 231. Aspartate 231 (4-aspartylphosphate intermediate) is an active-site residue.

This sequence belongs to the protein kinase superfamily. RIO-type Ser/Thr kinase family.

It catalyses the reaction L-seryl-[protein] + ATP = O-phospho-L-seryl-[protein] + ADP + H(+). The catalysed reaction is L-threonyl-[protein] + ATP = O-phospho-L-threonyl-[protein] + ADP + H(+). It carries out the reaction ATP + H2O = ADP + phosphate + H(+). Despite the protein kinase domain is proposed to act predominantly as an ATPase. The sequence is that of RIO-type serine/threonine-protein kinase Rio1 (rio1) from Methanocaldococcus jannaschii (strain ATCC 43067 / DSM 2661 / JAL-1 / JCM 10045 / NBRC 100440) (Methanococcus jannaschii).